Consider the following 380-residue polypeptide: Ankyrin repeat domain-containing protein 63 (380 aa).

ANK repeat units lie at residues 11 to 40 (AGTRTFLEAMQAGKVHLARFVLDALDRSII), 46 to 79 (QGRTPLMVAVGLPDPALRARFVRLLLEQGAAVNL), 83 to 112 (RGRTALSLACERGHLDAVQLLVQFSGDPEA), 116 to 145 (AGNSPVMWAAACGHGAVLEFLVRSFRRLGL), and 153 to 182 (AGLTALQLAAARGHGTCVQALTGPWGRAAA). 2 stretches are compositionally biased toward low complexity: residues 181–203 (AAAAAARGSNSDSPPGRPAPAAS) and 216–226 (RPLLARFARAA). Residues 181 to 256 (AAAAAARGSN…GSERPELGRS (76 aa)) form a disordered region. Serine 193 carries the phosphoserine modification. Serine 294 is modified (phosphoserine). The tract at residues 309-368 (PIGLSPHPEGGPGSGRLGLRRRSTAPDIPSLVGEAPGPESGPELEANALSVSVPGPNPWQ) is disordered.

In Homo sapiens (Human), this protein is Ankyrin repeat domain-containing protein 63.